The chain runs to 469 residues: Probable Xaa-Pro aminopeptidase AN0832 (469 aa).

Positions 260, 271, 398, and 437 each coordinate Mn(2+).

This sequence belongs to the peptidase M24B family. The cofactor is Mn(2+).

It catalyses the reaction Release of any N-terminal amino acid, including proline, that is linked to proline, even from a dipeptide or tripeptide.. In terms of biological role, catalyzes the removal of a penultimate prolyl residue from the N-termini of peptides. In Emericella nidulans (strain FGSC A4 / ATCC 38163 / CBS 112.46 / NRRL 194 / M139) (Aspergillus nidulans), this protein is Probable Xaa-Pro aminopeptidase AN0832.